Reading from the N-terminus, the 378-residue chain is Galanin receptor 2b (378 aa).

The Extracellular segment spans residues 1-30; the sequence is MSDHEDLNKAMGHWNASESYQLNPASVIVS. A helical transmembrane segment spans residues 31 to 51; the sequence is VVFSLIFLLGTIGNSLVLAVL. The Cytoplasmic segment spans residues 52–62; sequence LRSGQVGYNTT. The chain crosses the membrane as a helical span at residues 63-83; it reads NLFILNLSVADFFFIIFCVPF. Over 84–101 the chain is Extracellular; it reads QATIYSLEGWVFGSFMCK. Cys-100 and Cys-177 are oxidised to a cystine. Residues 102-123 traverse the membrane as a helical segment; that stretch reads VVHFFINLTMYASSFTLAAVSV. Residues 124–143 are Cytoplasmic-facing; that stretch reads DRYLAIRYPLRSRELRTPCN. Residues 144 to 164 form a helical membrane-spanning segment; the sequence is AVVAMVVIWGLSLVFAGPYLS. At 165–187 the chain is on the extracellular side; the sequence is YYDLIDFENSNVCVPGWEEHNRK. The chain crosses the membrane as a helical span at residues 188-208; the sequence is VLDTCTFVFGYVIPVLIVSLS. The Cytoplasmic portion of the chain corresponds to 209 to 238; sequence YTRTIKYLWTAVDPLDGMSESKRAKRKVTK. Residues 239-259 traverse the membrane as a helical segment; it reads MIIIVTVLFCICWLPYHVVIL. Topologically, residues 260–276 are extracellular; sequence CYLYGDFPFNQTTYAFR. A helical transmembrane segment spans residues 277-297; the sequence is LLSHCMAYANSCLNPIVYALV. Residues 298–378 lie on the Cytoplasmic side of the membrane; it reads SKHFRKGFKK…TITLPFQNQP (81 aa). Positions 339–362 are disordered; that stretch reads EVSQMNEENARQNESEMVNRPLAQ.

It belongs to the G-protein coupled receptor 1 family. In terms of tissue distribution, expressed in neurons in the ventral area of the interpeduncular nucleus (IPN) where expression often overlaps with spx1.

Its subcellular location is the membrane. In terms of biological role, receptor for the hormone galanin. Receptor for the hormones spexin-1 and spexin-2. The chain is Galanin receptor 2b from Danio rerio (Zebrafish).